A 484-amino-acid polypeptide reads, in one-letter code: mRNA decay activator protein ZFP36L2 (484 aa).

Residues Ser57 and Ser127 each carry the phosphoserine modification. The segment at 100–152 (YGQLKEPSGGSGTALVTKESKFRDRSFSENGERSQHLLHLQQQQKGGSGSQIN) is disordered. Over residues 117–134 (KESKFRDRSFSENGERSQ) the composition is skewed to basic and acidic residues. An RNA-binding motif is present at residues 155-160 (RYKTEL). 2 C3H1-type zinc fingers span residues 155-183 (RYKT…HGFH) and 193-221 (KYKT…HNAD). The tract at residues 172–213 (YGEKCQFAHGFHELRSLTRHPKYKTELCRTFHTIGFCPYGPR) is RNA-binding. Disordered regions lie at residues 261–304 (SLSF…SCSS) and 395–484 (QQGL…ISDD). A compositionally biased stretch (pro residues) spans 401–418 (PAPPPAQPPAAPAPPSPP). The span at 449-468 (YLSGSLSSGSLSGSESPSLD) shows a compositional bias: low complexity. Phosphoserine; by RPS6KA1 is present on residues Ser480 and Ser482.

As to quaternary structure, associates with the cytoplasmic CCR4-NOT deadenylase to trigger ARE-containing mRNA deadenylation and decay processes. Interacts with CNOT7; this interaction is inhibited in response to phorbol 12-myristate 13-acetate (PMA) treatment in a p38 MAPK-dependent manner. Interacts with CNOT6L. In terms of processing, phosphorylated by RPS6KA1 at Ser-480 and Ser-482 upon phorbol 12-myristate 13-acetate (PMA) treatment; this phosphorylation results in dissociation of the CCR4-NOT-deadenylase complex and induces p38 MAPK-mediated stabilization of the low-density lipoprotein (LDL) receptor (LDLR) mRNA. Phosphorylation occurs during early preadipocyte differentiation. In terms of tissue distribution, expressed in preadipocytes and adipocytes (at protein level). Expressed at highest level in lymphoid tissues such as thymus, spleen, lung, uterus, ovary, small and large intestine, mammary gland, fat and bone marrow. Expressed at intermediate level in kidney, heart, adrenal, eye and fetal liver. Weakly expressed in brain, skeletal muscle and liver. Expressed through B lymphocyte development. Expressed in superior cervical ganglion (SCG) and dorsal root ganglion (DRG). Expressed in embryonic stem cells (ESCs). Expressed in oocytes.

The protein localises to the nucleus. It is found in the cytoplasm. Its function is as follows. Zinc-finger RNA-binding protein that destabilizes several cytoplasmic AU-rich element (ARE)-containing mRNA transcripts by promoting their poly(A) tail removal or deadenylation, and hence provide a mechanism for attenuating protein synthesis. Acts as a 3'-untranslated region (UTR) ARE mRNA-binding adapter protein to communicate signaling events to the mRNA decay machinery. Functions by recruiting the CCR4-NOT deadenylase complex and probably other components of the cytoplasmic RNA decay machinery to the bound ARE-containing mRNAs, and hence promotes ARE-mediated mRNA deadenylation and decay processes. Binds to 3'-UTR ARE of numerous mRNAs. Promotes ARE-containing mRNA decay of the low-density lipoprotein (LDL) receptor (LDLR) mRNA in response to phorbol 12-myristate 13-acetate (PMA) treatment in a p38 MAPK-dependent manner. Positively regulates early adipogenesis by promoting ARE-mediated mRNA decay of immediate early genes (IEGs). Plays a role in mature peripheral neuron integrity by promoting ARE-containing mRNA decay of the transcriptional repressor REST mRNA. Plays a role in ovulation and oocyte meiotic maturation by promoting ARE-mediated mRNA decay of the luteinizing hormone receptor LHCGR mRNA. Acts as a negative regulator of erythroid cell differentiation: promotes glucocorticoid-induced self-renewal of erythroid cells by binding mRNAs that are induced or highly expressed during terminal erythroid differentiation and promotes their degradation, preventing erythroid cell differentiation. In association with ZFP36L1 maintains quiescence on developing B lymphocytes by promoting ARE-mediated decay of several mRNAs encoding cell cycle regulators that help B cells progress through the cell cycle, and hence ensuring accurate variable-diversity-joining (VDJ) recombination process and functional immune cell formation. Together with ZFP36L1 is also necessary for thymocyte development and prevention of T-cell acute lymphoblastic leukemia (T-ALL) transformation by promoting ARE-mediated mRNA decay of the oncogenic transcription factor NOTCH1 mRNA. The sequence is that of mRNA decay activator protein ZFP36L2 from Mus musculus (Mouse).